A 353-amino-acid chain; its full sequence is Uroporphyrinogen decarboxylase (353 aa).

Substrate is bound by residues 27–31 (RQAGR), Phe-46, Asp-76, Tyr-152, Ser-207, and His-321.

Belongs to the uroporphyrinogen decarboxylase family. As to quaternary structure, homodimer.

Its subcellular location is the cytoplasm. The catalysed reaction is uroporphyrinogen III + 4 H(+) = coproporphyrinogen III + 4 CO2. It functions in the pathway porphyrin-containing compound metabolism; protoporphyrin-IX biosynthesis; coproporphyrinogen-III from 5-aminolevulinate: step 4/4. Catalyzes the decarboxylation of four acetate groups of uroporphyrinogen-III to yield coproporphyrinogen-III. This Listeria monocytogenes serovar 1/2a (strain ATCC BAA-679 / EGD-e) protein is Uroporphyrinogen decarboxylase.